The chain runs to 110 residues: Neural hemoglobin (110 aa).

In terms of domain architecture, Globin spans 2 to 110 (VNWAAVVDDF…HAIDDILSHL (109 aa)). Heme is bound at residue His70.

It belongs to the globin family. Homotetramer. Self-associates in the deoxy state. Seems to dissociate upon oxygenation.

In terms of biological role, acts as an oxygen store capable of sustaining neuronal activity in an anoxic environment for 5 to 30 minutes. The polypeptide is Neural hemoglobin (Cerebratulus lacteus (Milky ribbon worm)).